Here is a 493-residue protein sequence, read N- to C-terminus: Glycerol kinase (493 aa).

T13 contributes to the ADP binding site. Residues T13, T14, and S15 each contribute to the ATP site. Residue T13 coordinates sn-glycerol 3-phosphate. R17 contacts ADP. 4 residues coordinate sn-glycerol 3-phosphate: R83, E84, Y135, and D244. 5 residues coordinate glycerol: R83, E84, Y135, D244, and Q245. Residues T266 and G309 each coordinate ADP. Residues T266, G309, Q313, and G410 each coordinate ATP. 2 residues coordinate ADP: G410 and N414.

This sequence belongs to the FGGY kinase family.

It catalyses the reaction glycerol + ATP = sn-glycerol 3-phosphate + ADP + H(+). The protein operates within polyol metabolism; glycerol degradation via glycerol kinase pathway; sn-glycerol 3-phosphate from glycerol: step 1/1. With respect to regulation, inhibited by fructose 1,6-bisphosphate (FBP). Key enzyme in the regulation of glycerol uptake and metabolism. Catalyzes the phosphorylation of glycerol to yield sn-glycerol 3-phosphate. The polypeptide is Glycerol kinase (Shewanella pealeana (strain ATCC 700345 / ANG-SQ1)).